Reading from the N-terminus, the 612-residue chain is Proton pump-interactor 1 (612 aa).

Positions 1-58 (MGVEVVNSGGFEVAPAPFEGKPEKNGKLDQGKGDDAPINFGSVGELPKNAEENNNKVV) are disordered. A compositionally biased stretch (basic and acidic residues) spans 20-35 (GKPEKNGKLDQGKGDD). Coiled-coil stretches lie at residues 90–113 (PKIK…RTGV) and 251–314 (LDGV…NSEY). Composition is skewed to basic and acidic residues over residues 374-387 (LSRD…DEKP), 434-446 (EKAK…KNVA), 459-498 (PQKE…EKAA), and 505-519 (AQKE…EQEK). Residues 374–572 (LSRDGRMRNP…PIRNRTRGRG (199 aa)) form a disordered region. The stretch at 466-526 (VDAATAKEMR…QEKKAKKKTG (61 aa)) forms a coiled coil. Positions 531–545 (TETEEVPEASEEEIE) are enriched in acidic residues. Serine 540 carries the post-translational modification Phosphoserine. A compositionally biased stretch (basic and acidic residues) spans 549 to 564 (QEEKPQKEKVFKEKPI). Residues 591–611 (VYAAPAALVVLLLLVLGYYYV) form a helical membrane-spanning segment.

This sequence belongs to the plant Proton pump-interactor protein family. In terms of assembly, interacts with AHA1 via N-terminal region. Strongly expressed in root and shoot vascular systems, particularly in meristematic and sink tissues. Also present in pollen, stigmas and siliques, but not in developing embryos.

The protein localises to the cell membrane. It localises to the endoplasmic reticulum membrane. Its function is as follows. Promotes AHA1 plasma membrane ATPase activity by binding to a site different from the 14-3-3 binding site. In Arabidopsis thaliana (Mouse-ear cress), this protein is Proton pump-interactor 1 (PPI1).